A 1432-amino-acid polypeptide reads, in one-letter code: ABC transporter B family member 3 (1432 aa).

Disordered stretches follow at residues 1–21 (MDDG…EEEI) and 48–149 (ITQP…KTEE). Composition is skewed to low complexity over residues 52 to 62 (SNNNNNSNNNN), 76 to 106 (NNNN…FNNN), and 118 to 135 (NTNE…NNND). The stretch at 117 to 163 (ENTNENNNKNNNNNNNNNDDYNDGADERVKTEEEIKKEAENELNQSV) forms a coiled coil. Residues 180 to 479 (MFLGTIAAVI…ASPCLALFAQ (300 aa)) enclose the ABC transmembrane type-1 1 domain. 6 helical membrane passes run 185–205 (IAAV…GLVV), 232–252 (LLML…LWMI), 303–323 (KVGR…IGFT), 325–345 (GWQL…GGFF), 410–430 (GLGL…AFWY), and 457–477 (FFAV…LALF). Residues 514-750 (IEFKDVGFHY…QGLYFDLVEK (237 aa)) form the ABC transporter 1 domain. 549–556 (GDSGGGKS) provides a ligand contact to ATP. The interval 787-819 (KRSLRKNESESNKKDKEDSNNKKKKKSNKKKVE) is disordered. Positions 791 to 807 (RKNESESNKKDKEDSNN) are enriched in basic and acidic residues. An ABC transmembrane type-1 2 domain is found at 837–1157 (WCFGFLSAVG…ASSFAPDLAK (321 aa)). A run of 6 helical transmembrane segments spans residues 838 to 858 (CFGF…AMVF), 882 to 902 (LMFV…GFLF), 968 to 988 (MVGG…VIIA), 989 to 1009 (CFPL…GFSS), 1060 to 1080 (ISGF…CLSF), and 1134 to 1154 (VFFA…FAPD). The 237-residue stretch at 1192 to 1428 (IEFKNLHFSY…EGPYSQLWYN (237 aa)) folds into the ABC transporter 2 domain. 1227-1234 (GDSGGGKS) is an ATP binding site.

Belongs to the ABC transporter superfamily. ABCB family. Multidrug resistance exporter (TC 3.A.1.201) subfamily.

The protein localises to the membrane. The chain is ABC transporter B family member 3 (abcB3) from Dictyostelium discoideum (Social amoeba).